A 146-amino-acid chain; its full sequence is D-aminoacyl-tRNA deacylase (146 aa).

A Gly-cisPro motif, important for rejection of L-amino acids motif is present at residues 137-138; sequence GP.

The protein belongs to the DTD family. In terms of assembly, homodimer.

It is found in the cytoplasm. It carries out the reaction glycyl-tRNA(Ala) + H2O = tRNA(Ala) + glycine + H(+). It catalyses the reaction a D-aminoacyl-tRNA + H2O = a tRNA + a D-alpha-amino acid + H(+). An aminoacyl-tRNA editing enzyme that deacylates mischarged D-aminoacyl-tRNAs. Also deacylates mischarged glycyl-tRNA(Ala), protecting cells against glycine mischarging by AlaRS. Acts via tRNA-based rather than protein-based catalysis; rejects L-amino acids rather than detecting D-amino acids in the active site. By recycling D-aminoacyl-tRNA to D-amino acids and free tRNA molecules, this enzyme counteracts the toxicity associated with the formation of D-aminoacyl-tRNA entities in vivo and helps enforce protein L-homochirality. In Bacillus thuringiensis subsp. konkukian (strain 97-27), this protein is D-aminoacyl-tRNA deacylase.